We begin with the raw amino-acid sequence, 184 residues long: ATP synthase subunit b, chloroplastic (184 aa).

Residues 29–49 (TNLINLGVVLGLLVYFGKGVL) form a helical membrane-spanning segment.

The protein belongs to the ATPase B chain family. In terms of assembly, F-type ATPases have 2 components, F(1) - the catalytic core - and F(0) - the membrane proton channel. F(1) has five subunits: alpha(3), beta(3), gamma(1), delta(1), epsilon(1). F(0) has four main subunits: a(1), b(1), b'(1) and c(10-14). The alpha and beta chains form an alternating ring which encloses part of the gamma chain. F(1) is attached to F(0) by a central stalk formed by the gamma and epsilon chains, while a peripheral stalk is formed by the delta, b and b' chains.

The protein resides in the plastid. Its subcellular location is the chloroplast thylakoid membrane. F(1)F(0) ATP synthase produces ATP from ADP in the presence of a proton or sodium gradient. F-type ATPases consist of two structural domains, F(1) containing the extramembraneous catalytic core and F(0) containing the membrane proton channel, linked together by a central stalk and a peripheral stalk. During catalysis, ATP synthesis in the catalytic domain of F(1) is coupled via a rotary mechanism of the central stalk subunits to proton translocation. Functionally, component of the F(0) channel, it forms part of the peripheral stalk, linking F(1) to F(0). This Anthoceros angustus (Hornwort) protein is ATP synthase subunit b, chloroplastic.